Consider the following 72-residue polypeptide: U-actitoxin-Aeq5b (72 aa).

The first 20 residues, 1–20 (MNQVMTIFLVLGVIVYSVES), serve as a signal peptide directing secretion. Disulfide bonds link cysteine 33–cysteine 71, cysteine 37–cysteine 66, cysteine 44–cysteine 59, and cysteine 50–cysteine 56.

Belongs to the Acrorhagin I family. In terms of tissue distribution, expressed by acrorhagi.

The protein resides in the secreted. It is found in the nematocyst. In terms of biological role, toxin that is lethal to crab. It interacts with divalent metal ions (zinc and nickel) suggesting it may function as a metal ion chelator to regulate metal ion levels or as a metal ion transporter, or that its function is modulated by metal ions. Is not active against any of the voltage-gated potassium and sodium channels tested. In addition, it does not show activity in bacterial and fungal growth inhibitory assays as well as in hemolytic assays. In Actinia equina (Beadlet anemone), this protein is U-actitoxin-Aeq5b.